The following is a 47-amino-acid chain: PhoP/PhoQ regulator MgrB (47 aa).

A helical transmembrane segment spans residues 6-26 (WVVLVVVVLACLLLWAQVFNM).

The protein belongs to the MgrB family. As to quaternary structure, may form homooligomers. Probably interacts with the periplasmic domain of PhoQ.

The protein localises to the cell inner membrane. PhoP-regulated transcription is redox-sensitive, being activated when the periplasm becomes more reducing. MgrB acts between DsbA/DsbB and PhoP/PhoQ in this pathway. Represses PhoP/PhoQ signaling, possibly by binding to the periplasmic domain of PhoQ, altering its activity and that of downstream effector PhoP. The sequence is that of PhoP/PhoQ regulator MgrB from Escherichia coli O157:H7.